Reading from the N-terminus, the 313-residue chain is Ribosomal RNA small subunit methyltransferase H (313 aa).

Residues Gly35 to His37, Asp55, Phe80, Asp102, and Gln109 each bind S-adenosyl-L-methionine.

This sequence belongs to the methyltransferase superfamily. RsmH family.

The protein resides in the cytoplasm. It catalyses the reaction cytidine(1402) in 16S rRNA + S-adenosyl-L-methionine = N(4)-methylcytidine(1402) in 16S rRNA + S-adenosyl-L-homocysteine + H(+). Specifically methylates the N4 position of cytidine in position 1402 (C1402) of 16S rRNA. The polypeptide is Ribosomal RNA small subunit methyltransferase H (Shewanella frigidimarina (strain NCIMB 400)).